A 132-amino-acid chain; its full sequence is MSTVDIDSLVEQICSLDLCKAAELVDKMEQKLGFPKGGLLTAVPAAGGGQAESSAAEEKTDFSVIFDSYAADKKISVIKAVRECTNLGLKEAKEFVEKEGAKELIEGKKYKKEEAEEIKKKLEDAGAKVIIK.

It belongs to the bacterial ribosomal protein bL12 family. As to quaternary structure, homodimer. Part of the ribosomal stalk of the 50S ribosomal subunit. Forms a multimeric L10(L12)X complex, where L10 forms an elongated spine to which 2 to 4 L12 dimers bind in a sequential fashion. Binds GTP-bound translation factors.

In terms of biological role, forms part of the ribosomal stalk which helps the ribosome interact with GTP-bound translation factors. Is thus essential for accurate translation. In Ehrlichia canis (strain Jake), this protein is Large ribosomal subunit protein bL12.